A 603-amino-acid polypeptide reads, in one-letter code: Isovalerate--CoA ligase AAE2 (603 aa).

Belongs to the ATP-dependent AMP-binding enzyme family. As to expression, expressed at low levels in leaves, flowers and developing seeds.

It catalyses the reaction 3-methylbutanoate + ATP + CoA = 3-methylbutanoyl-CoA + AMP + diphosphate. It carries out the reaction hexanoate + ATP + CoA = hexanoyl-CoA + AMP + diphosphate. The catalysed reaction is butanoate + ATP + CoA = butanoyl-CoA + AMP + diphosphate. The enzyme catalyses pentanoate + ATP + CoA = pentanoyl-CoA + AMP + diphosphate. It catalyses the reaction 3-methylpentanoate + ATP + CoA = 3-methylpentanoyl-CoA + AMP + diphosphate. It carries out the reaction 4-methylpentanoate + ATP + CoA = 4-methylpentanoyl-CoA + AMP + diphosphate. Functionally, catalyzes the ligation of CoA on isovalerate to produce 3-methylbutanoyl-CoA. Can also use butanoate, pentanoate, hexanoate, 3-methylpentanoate and 4-methylpentanoate as substrates with a lower efficiency. This is Isovalerate--CoA ligase AAE2 from Arabidopsis thaliana (Mouse-ear cress).